We begin with the raw amino-acid sequence, 306 residues long: N-acetylmuramic acid 6-phosphate etherase (306 aa).

An SIS domain is found at 59-222 (ISEALRQGGR…STGAMVQLGK (164 aa)). The Proton donor role is filled by E87. Residue E118 is part of the active site.

The protein belongs to the GCKR-like family. MurNAc-6-P etherase subfamily. Homodimer.

It catalyses the reaction N-acetyl-D-muramate 6-phosphate + H2O = N-acetyl-D-glucosamine 6-phosphate + (R)-lactate. The protein operates within amino-sugar metabolism; N-acetylmuramate degradation. Specifically catalyzes the cleavage of the D-lactyl ether substituent of MurNAc 6-phosphate, producing GlcNAc 6-phosphate and D-lactate. This is N-acetylmuramic acid 6-phosphate etherase from Gloeothece citriformis (strain PCC 7424) (Cyanothece sp. (strain PCC 7424)).